The sequence spans 297 residues: Bifunctional protein FolD (297 aa).

Residues 164-166 (GRS), Ser193, and Ile234 contribute to the NADP(+) site.

This sequence belongs to the tetrahydrofolate dehydrogenase/cyclohydrolase family. As to quaternary structure, homodimer.

The enzyme catalyses (6R)-5,10-methylene-5,6,7,8-tetrahydrofolate + NADP(+) = (6R)-5,10-methenyltetrahydrofolate + NADPH. It catalyses the reaction (6R)-5,10-methenyltetrahydrofolate + H2O = (6R)-10-formyltetrahydrofolate + H(+). The protein operates within one-carbon metabolism; tetrahydrofolate interconversion. Functionally, catalyzes the oxidation of 5,10-methylenetetrahydrofolate to 5,10-methenyltetrahydrofolate and then the hydrolysis of 5,10-methenyltetrahydrofolate to 10-formyltetrahydrofolate. The chain is Bifunctional protein FolD from Halobacterium salinarum (strain ATCC 700922 / JCM 11081 / NRC-1) (Halobacterium halobium).